Reading from the N-terminus, the 247-residue chain is Probable dihydroorotate dehydrogenase B (NAD(+)), electron transfer subunit (247 aa).

Positions 1 to 87 constitute an FAD-binding FR-type domain; that stretch reads MLRRVMIKET…RGPYGNGFKS (87 aa). C200, C205, C208, and C216 together coordinate [2Fe-2S] cluster.

It belongs to the PyrK family. In terms of assembly, heterotetramer of 2 PyrK and 2 PyrD type B subunits. It depends on [2Fe-2S] cluster as a cofactor. The cofactor is FAD.

It participates in pyrimidine metabolism; UMP biosynthesis via de novo pathway; orotate from (S)-dihydroorotate (NAD(+) route): step 1/1. Functionally, responsible for channeling the electrons from the oxidation of dihydroorotate from the FMN redox center in the PyrD type B subunit to the ultimate electron acceptor NAD(+). In Pyrococcus abyssi (strain GE5 / Orsay), this protein is Probable dihydroorotate dehydrogenase B (NAD(+)), electron transfer subunit.